A 310-amino-acid chain; its full sequence is ADP-L-glycero-D-manno-heptose-6-epimerase (310 aa).

Residues 10-11 (FI), 31-32 (DN), Lys38, Lys53, 75-79 (EGACS), and Asn92 each bind NADP(+). Residue Tyr140 is the Proton acceptor of the active site. Lys144 is an NADP(+) binding site. Residue Asn169 coordinates substrate. Positions 170 and 178 each coordinate NADP(+). Catalysis depends on Lys178, which acts as the Proton acceptor. Residues Ser180, His187, 201–204 (FEGS), Arg209, and Tyr272 each bind substrate.

It belongs to the NAD(P)-dependent epimerase/dehydratase family. HldD subfamily. In terms of assembly, homopentamer. The cofactor is NADP(+).

It catalyses the reaction ADP-D-glycero-beta-D-manno-heptose = ADP-L-glycero-beta-D-manno-heptose. The protein operates within nucleotide-sugar biosynthesis; ADP-L-glycero-beta-D-manno-heptose biosynthesis; ADP-L-glycero-beta-D-manno-heptose from D-glycero-beta-D-manno-heptose 7-phosphate: step 4/4. In terms of biological role, catalyzes the interconversion between ADP-D-glycero-beta-D-manno-heptose and ADP-L-glycero-beta-D-manno-heptose via an epimerization at carbon 6 of the heptose. The polypeptide is ADP-L-glycero-D-manno-heptose-6-epimerase (Citrobacter koseri (strain ATCC BAA-895 / CDC 4225-83 / SGSC4696)).